Here is a 409-residue protein sequence, read N- to C-terminus: Transforming growth factor beta-3 proprotein (409 aa).

A signal peptide spans 1-21; that stretch reads MHLQRALVVLALLNFATVSLS. Residues Asn72, Asn133, and Asn140 are each glycosylated (N-linked (GlcNAc...) asparagine). The Cell attachment site motif lies at 259-261; it reads RGD. 4 cysteine pairs are disulfide-bonded: Cys304–Cys313, Cys312–Cys375, Cys341–Cys406, and Cys345–Cys408.

It belongs to the TGF-beta family. As to quaternary structure, interacts with ASPN. Latency-associated peptide: Homodimer; disulfide-linked. Latency-associated peptide: Interacts with Transforming growth factor beta-3 (TGF-beta-3) chain; interaction is non-covalent and maintains (TGF-beta-3) in a latent state. Latency-associated peptide: Interacts with LRRC32/GARP; leading to regulate activation of TGF-beta-3 and promote epithelial fusion during palate development. Latency-associated peptide: Interacts (via cell attachment site) with integrins, leading to release of the active TGF-beta-3. Transforming growth factor beta-3: Homodimer; disulfide-linked. Transforming growth factor beta-3: Interacts with TGF-beta receptors (TGFBR1 and TGFBR2), leading to signal transduction. Transforming growth factor beta-3 proprotein: The precursor proprotein is cleaved in the Golgi apparatus to form Transforming growth factor beta-3 (TGF-beta-3) and Latency-associated peptide (LAP) chains, which remain non-covalently linked, rendering TGF-beta-3 inactive.

The protein localises to the secreted. The protein resides in the extracellular space. Its subcellular location is the extracellular matrix. Its function is as follows. Transforming growth factor beta-3 proprotein: Precursor of the Latency-associated peptide (LAP) and Transforming growth factor beta-3 (TGF-beta-3) chains, which constitute the regulatory and active subunit of TGF-beta-3, respectively. Functionally, required to maintain the Transforming growth factor beta-3 (TGF-beta-3) chain in a latent state during storage in extracellular matrix. Associates non-covalently with TGF-beta-3 and regulates its activation via interaction with 'milieu molecules', such as LTBP1 and LRRC32/GARP, that control activation of TGF-beta-3. Interaction with integrins results in distortion of the Latency-associated peptide chain and subsequent release of the active TGF-beta-3. In terms of biological role, transforming growth factor beta-3: Multifunctional protein that regulates embryogenesis and cell differentiation and is required in various processes such as secondary palate development. Activation into mature form follows different steps: following cleavage of the proprotein in the Golgi apparatus, Latency-associated peptide (LAP) and Transforming growth factor beta-3 (TGF-beta-3) chains remain non-covalently linked rendering TGF-beta-3 inactive during storage in extracellular matrix. At the same time, LAP chain interacts with 'milieu molecules', such as LTBP1 and LRRC32/GARP that control activation of TGF-beta-3 and maintain it in a latent state during storage in extracellular milieus. TGF-beta-3 is released from LAP by integrins: integrin-binding results in distortion of the LAP chain and subsequent release of the active TGF-beta-3. Once activated following release of LAP, TGF-beta-3 acts by binding to TGF-beta receptors (TGFBR1 and TGFBR2), which transduce signal. In Sus scrofa (Pig), this protein is Transforming growth factor beta-3 proprotein (TGFB3).